Here is a 93-residue protein sequence, read N- to C-terminus: Toxin RelE1 (93 aa).

Belongs to the RelE toxin family.

Its function is as follows. Toxic component of a type II toxin-antitoxin (TA) system. Its toxic effect is neutralized by coexpression with cognate antitoxin RelB1 but no other ParD or RelB antitoxin. This chain is Toxin RelE1 (relE1), found in Caulobacter vibrioides (strain ATCC 19089 / CIP 103742 / CB 15) (Caulobacter crescentus).